We begin with the raw amino-acid sequence, 188 residues long: ATP-dependent protease subunit HslV (188 aa).

Thr-14 is a catalytic residue. Na(+) contacts are provided by Ala-173, Cys-176, and Thr-179.

The protein belongs to the peptidase T1B family. HslV subfamily. As to quaternary structure, a double ring-shaped homohexamer of HslV is capped on each side by a ring-shaped HslU homohexamer. The assembly of the HslU/HslV complex is dependent on binding of ATP.

It is found in the cytoplasm. It carries out the reaction ATP-dependent cleavage of peptide bonds with broad specificity.. Its activity is regulated as follows. Allosterically activated by HslU binding. Protease subunit of a proteasome-like degradation complex believed to be a general protein degrading machinery. The sequence is that of ATP-dependent protease subunit HslV from Caulobacter vibrioides (strain ATCC 19089 / CIP 103742 / CB 15) (Caulobacter crescentus).